Consider the following 137-residue polypeptide: Large ribosomal subunit protein uL16 (137 aa).

Belongs to the universal ribosomal protein uL16 family. In terms of assembly, part of the 50S ribosomal subunit.

In terms of biological role, binds 23S rRNA and is also seen to make contacts with the A and possibly P site tRNAs. The sequence is that of Large ribosomal subunit protein uL16 from Allorhizobium ampelinum (strain ATCC BAA-846 / DSM 112012 / S4) (Agrobacterium vitis (strain S4)).